A 284-amino-acid polypeptide reads, in one-letter code: MATSSTFSSLLPSPPALLSDHRSPPPSIRYSFSPLTTPKSSRLGFTVPEKRNLAANSSLVEVSIGGESDPPPSSSGSGGDDKQIALLKLKLLSVVSGLNRGLVASVDDLERAEVAAKELETAGGPVDLTDDLDKLQGKWRLLYSSAFSSRSLGGSRPGLPTGRLIPVTLGQVFQRIDVFSKDFDNIAEVELGAPWPFPPLEATATLAHKFELLGTCKIKITFEKTTVKTSGNLSQIPPFDIPRLPDSFRPSSNPGTGDFEVTYVDDTMRITRGDRGELRVFVIA.

The segment covering 1 to 11 (MATSSTFSSLL) has biased composition (low complexity). Residues 1–47 (MATSSTFSSLLPSPPALLSDHRSPPPSIRYSFSPLTTPKSSRLGFTV) form a disordered region. The transit peptide at 1 to 72 (MATSSTFSSL…SIGGESDPPP (72 aa)) directs the protein to the chloroplast. Phosphoserine occurs at positions 96, 105, 148, 151, and 155.

This sequence belongs to the PAP/fibrillin family. In terms of assembly, part of the Photosystem II light-harvesting complex (LHCII). Phosphorylated as part of a basal defense response.

It is found in the plastid. The protein resides in the chloroplast. The protein localises to the plastoglobule. Functionally, required for plastoglobule development and resistance to multiple stresses. Regulates plastoglobule osmiophilic content. May be involved in the transport of lipophilic antioxidants in and out of the plastoglobule. This chain is Plastid-lipid-associated protein 6, chloroplastic, found in Arabidopsis thaliana (Mouse-ear cress).